The chain runs to 572 residues: Phenylalanine--tRNA ligase beta subunit (572 aa).

The B5 domain occupies Leu-285–Pro-363. Residues Asp-341, Asp-347, Asp-350, and Asp-351 each contribute to the Mg(2+) site.

It belongs to the phenylalanyl-tRNA synthetase beta subunit family. Type 2 subfamily. Tetramer of two alpha and two beta subunits. It depends on Mg(2+) as a cofactor.

The protein localises to the cytoplasm. The enzyme catalyses tRNA(Phe) + L-phenylalanine + ATP = L-phenylalanyl-tRNA(Phe) + AMP + diphosphate + H(+). This Natronomonas pharaonis (strain ATCC 35678 / DSM 2160 / CIP 103997 / JCM 8858 / NBRC 14720 / NCIMB 2260 / Gabara) (Halobacterium pharaonis) protein is Phenylalanine--tRNA ligase beta subunit.